The chain runs to 729 residues: Cellulose synthase catalytic subunit [UDP-forming] (729 aa).

3 consecutive transmembrane segments (helical) span residues 30–50 (LATW…VAVP), 110–130 (FILG…LVLG), and 171–191 (TTVL…IHLL). The segment at 151 to 244 (LWPSVDVFIP…YVAIFDCDHI (94 aa)) is catalytic subdomain A. D193 is an active-site residue. Residues D240 and D242 each contribute to the substrate site. The catalytic subdomain B stretch occupies residues 321–381 (TALEEVGGVA…AQRIRWARGM (61 aa)). D337 is an active-site residue. Transmembrane regions (helical) follow at residues 405-425 (LNAM…TAPL), 427-447 (YLFF…AYAL), 520-540 (LFLL…LIYV), 549-569 (IWFN…TIAT), and 610-630 (MAIM…QIGL). A PilZ domain is found at 575–671 (QVRSAHRVPL…QERWLVASTF (97 aa)).

The protein belongs to the glycosyltransferase 2 family. Mg(2+) is required as a cofactor.

Its subcellular location is the cell inner membrane. It catalyses the reaction [(1-&gt;4)-beta-D-glucosyl](n) + UDP-alpha-D-glucose = [(1-&gt;4)-beta-D-glucosyl](n+1) + UDP + H(+). Its pathway is glycan metabolism; bacterial cellulose biosynthesis. With respect to regulation, activated by bis-(3'-5') cyclic diguanylic acid (c-di-GMP). In terms of biological role, catalytic subunit of cellulose synthase. It polymerizes uridine 5'-diphosphate glucose to cellulose, which is produced as an extracellular component for mechanical and chemical protection. The protein is Cellulose synthase catalytic subunit [UDP-forming] (bcsA) of Xanthomonas axonopodis pv. citri (strain 306).